We begin with the raw amino-acid sequence, 424 residues long: Histidine--tRNA ligase (424 aa).

Belongs to the class-II aminoacyl-tRNA synthetase family. Homodimer.

The protein localises to the cytoplasm. The enzyme catalyses tRNA(His) + L-histidine + ATP = L-histidyl-tRNA(His) + AMP + diphosphate + H(+). This Salmonella gallinarum (strain 287/91 / NCTC 13346) protein is Histidine--tRNA ligase.